The chain runs to 235 residues: 2-C-methyl-D-erythritol 4-phosphate cytidylyltransferase (235 aa).

It belongs to the IspD/TarI cytidylyltransferase family. IspD subfamily.

It catalyses the reaction 2-C-methyl-D-erythritol 4-phosphate + CTP + H(+) = 4-CDP-2-C-methyl-D-erythritol + diphosphate. Its pathway is isoprenoid biosynthesis; isopentenyl diphosphate biosynthesis via DXP pathway; isopentenyl diphosphate from 1-deoxy-D-xylulose 5-phosphate: step 2/6. Catalyzes the formation of 4-diphosphocytidyl-2-C-methyl-D-erythritol from CTP and 2-C-methyl-D-erythritol 4-phosphate (MEP). This Pseudomonas putida (strain GB-1) protein is 2-C-methyl-D-erythritol 4-phosphate cytidylyltransferase.